Consider the following 365-residue polypeptide: Peptide chain release factor 2 (365 aa).

Glutamine 252 carries the N5-methylglutamine modification.

This sequence belongs to the prokaryotic/mitochondrial release factor family. Methylated by PrmC. Methylation increases the termination efficiency of RF2.

Its subcellular location is the cytoplasm. Peptide chain release factor 2 directs the termination of translation in response to the peptide chain termination codons UGA and UAA. The polypeptide is Peptide chain release factor 2 (Colwellia psychrerythraea (strain 34H / ATCC BAA-681) (Vibrio psychroerythus)).